Consider the following 245-residue polypeptide: tRNA (guanine-N(1)-)-methyltransferase (245 aa).

S-adenosyl-L-methionine-binding positions include glycine 111 and 131–136; that span reads MGDYVL.

Belongs to the RNA methyltransferase TrmD family. Homodimer.

It localises to the cytoplasm. It carries out the reaction guanosine(37) in tRNA + S-adenosyl-L-methionine = N(1)-methylguanosine(37) in tRNA + S-adenosyl-L-homocysteine + H(+). Its function is as follows. Specifically methylates guanosine-37 in various tRNAs. This Staphylococcus epidermidis (strain ATCC 35984 / DSM 28319 / BCRC 17069 / CCUG 31568 / BM 3577 / RP62A) protein is tRNA (guanine-N(1)-)-methyltransferase.